The chain runs to 146 residues: Bacterial hemoglobin (146 aa).

The region spanning 1–138 is the Globin domain; sequence MLDQQTINII…IADVFIQVEA (138 aa). Residues Gln53 and His85 each contribute to the heme b site.

This sequence belongs to the globin family. In terms of assembly, homodimer.

Its function is as follows. This protein functions as a terminal oxidase. The protein is Bacterial hemoglobin (vhb) of Vitreoscilla stercoraria.